The primary structure comprises 653 residues: Putative clathrin assembly protein At2g25430 (653 aa).

Positions 23 to 159 (VASNMAPDLE…ELALFERKSG (137 aa)) constitute an ENTH domain. Positions 160 to 171 (VSVNSGGNSSHH) are enriched in low complexity. Positions 160–240 (VSVNSGGNSS…GGGGGGRDEK (81 aa)) are disordered. Residues 172 to 186 (SNNDDRYGRGRDDFR) show a composition bias toward basic and acidic residues. Gly residues predominate over residues 197–214 (NGGGGGSDFRGDNNGYGG). At Ser-221 the chain carries Phosphoserine. Thr-244 is modified (phosphothreonine). The segment covering 376–389 (RAKRGKSPERKEIE) has biased composition (basic and acidic residues). The tract at residues 376–431 (RAKRGKSPERKEIEAPPPVVEEEEPEPDMNEIKALPPPENYTPPPPPEPEPQPEKP) is disordered. Residues 395-404 (VEEEEPEPDM) are compositionally biased toward acidic residues. The span at 410–425 (LPPPENYTPPPPPEPE) shows a compositional bias: pro residues.

The protein localises to the membrane. The protein resides in the clathrin-coated pit. It is found in the golgi apparatus. Its subcellular location is the cytoplasmic vesicle. It localises to the clathrin-coated vesicle. The chain is Putative clathrin assembly protein At2g25430 from Arabidopsis thaliana (Mouse-ear cress).